The primary structure comprises 141 residues: Hemoglobin subunit alpha-D (141 aa).

Residues V1–R141 form the Globin domain. Residues Q58 and H87 each coordinate heme b.

This sequence belongs to the globin family. As to quaternary structure, heterotetramer of two alpha chains and two beta chains. In terms of tissue distribution, red blood cells.

In terms of biological role, involved in oxygen transport from the lung to the various peripheral tissues. The chain is Hemoglobin subunit alpha-D from Drymarchon melanurus erebennus (Texas indigo snake).